Reading from the N-terminus, the 530-residue chain is Tyrosinase (530 aa).

A signal peptide spans 1-17; sequence MLLAALYCLLWSFRTSA. Residues 19-473 are Lumenal, melanosome-facing; that stretch reads HFPRACASSK…IKPYLEQAQR (455 aa). N86 carries an N-linked (GlcNAc...) asparagine glycan. H180, H202, and H211 together coordinate Cu cation. N-linked (GlcNAc...) asparagine glycans are attached at residues N230, N290, and N337. H363 and H367 together coordinate Cu cation. An N-linked (GlcNAc...) asparagine glycan is attached at N371. Residue H390 coordinates Cu cation. The helical transmembrane segment at 474 to 494 threads the bilayer; the sequence is IWPWLIGAAVVGSVLTAVLGG. Residues 495–530 are Cytoplasmic-facing; sequence LTSLLCRRKRNQLPEEKQPLLMEKEDYHNLMYQSHL.

This sequence belongs to the tyrosinase family. As to quaternary structure, forms an OPN3-dependent complex with DCT in response to blue light in melanocytes. Cu(2+) is required as a cofactor. Post-translationally, glycosylated.

The protein localises to the melanosome membrane. The protein resides in the melanosome. It carries out the reaction 2 L-dopa + O2 = 2 L-dopaquinone + 2 H2O. The enzyme catalyses L-tyrosine + O2 = L-dopaquinone + H2O. It catalyses the reaction 2 5,6-dihydroxyindole-2-carboxylate + O2 = 2 indole-5,6-quinone-2-carboxylate + 2 H2O. In terms of biological role, this is a copper-containing oxidase that functions in the formation of pigments such as melanins and other polyphenolic compounds. Catalyzes the initial and rate limiting step in the cascade of reactions leading to melanin production from tyrosine. In addition to hydroxylating tyrosine to DOPA (3,4-dihydroxyphenylalanine), also catalyzes the oxidation of DOPA to DOPA-quinone, and possibly the oxidation of DHI (5,6-dihydroxyindole) to indole-5,6 quinone. This chain is Tyrosinase (TYR), found in Bos taurus (Bovine).